Reading from the N-terminus, the 275-residue chain is Dermonecrotic toxin SpeSicTox-betaIIA2iii (275 aa).

His5 is a catalytic residue. Positions 25 and 27 each coordinate Mg(2+). His41 (nucleophile) is an active-site residue. 2 cysteine pairs are disulfide-bonded: Cys45/Cys51 and Cys47/Cys190. Asp85 contributes to the Mg(2+) binding site.

The protein belongs to the arthropod phospholipase D family. Class II subfamily. Mg(2+) serves as cofactor. As to expression, expressed by the venom gland.

It localises to the secreted. The catalysed reaction is an N-(acyl)-sphingosylphosphocholine = an N-(acyl)-sphingosyl-1,3-cyclic phosphate + choline. The enzyme catalyses an N-(acyl)-sphingosylphosphoethanolamine = an N-(acyl)-sphingosyl-1,3-cyclic phosphate + ethanolamine. It catalyses the reaction a 1-acyl-sn-glycero-3-phosphocholine = a 1-acyl-sn-glycero-2,3-cyclic phosphate + choline. It carries out the reaction a 1-acyl-sn-glycero-3-phosphoethanolamine = a 1-acyl-sn-glycero-2,3-cyclic phosphate + ethanolamine. Dermonecrotic toxins cleave the phosphodiester linkage between the phosphate and headgroup of certain phospholipids (sphingolipid and lysolipid substrates), forming an alcohol (often choline) and a cyclic phosphate. This toxin acts on sphingomyelin (SM). It may also act on ceramide phosphoethanolamine (CPE), lysophosphatidylcholine (LPC) and lysophosphatidylethanolamine (LPE), but not on lysophosphatidylserine (LPS), and lysophosphatidylglycerol (LPG). It acts by transphosphatidylation, releasing exclusively cyclic phosphate products as second products. Induces dermonecrosis, hemolysis, increased vascular permeability, edema, inflammatory response, and platelet aggregation. The chain is Dermonecrotic toxin SpeSicTox-betaIIA2iii from Sicarius peruensis (Six-eyed sand spider).